Consider the following 417-residue polypeptide: MREFKSYTVNFGPQHPAAHGVLRMVLEMEGETVRRADPHIGLLHRATEKLAESKPYNQSIGYMDRLDYVSMLCNEHAYVMAIEKLLGIEAPIRAQYIRVMFDEITRILNHLMWLGAHGLDVGAMTAFLYCFREREDLMDCYEAVSGARMHAAYYRPGGVYRDLPESMPKYEPSKFRSKKELELMNAARQGTMLDFIEDFTERFPGCVDEYETLLTENRIWRQRLVDVGVVSPERALQLGFSGPMLRGSGIEWDLRKKQPYDVYDRVEFDIPVGTNGDCYDRYLVRIEEMRQSNRIIKQCVDWLRHNPGPVMLEDHKVAPPSREEMKDDMESLIHHFKLFTEGYTTPPGEVYAAVEAPKGEFGCYMISDGANKPYRVKLRAPGFAHLSAMDEMARGHMLADVVAIIGTQDIVFGEIDR.

The protein belongs to the complex I 49 kDa subunit family. NDH-1 is composed of 14 different subunits. Subunits NuoB, C, D, E, F, and G constitute the peripheral sector of the complex.

Its subcellular location is the cell inner membrane. The catalysed reaction is a quinone + NADH + 5 H(+)(in) = a quinol + NAD(+) + 4 H(+)(out). Functionally, NDH-1 shuttles electrons from NADH, via FMN and iron-sulfur (Fe-S) centers, to quinones in the respiratory chain. The immediate electron acceptor for the enzyme in this species is believed to be ubiquinone. Couples the redox reaction to proton translocation (for every two electrons transferred, four hydrogen ions are translocated across the cytoplasmic membrane), and thus conserves the redox energy in a proton gradient. The chain is NADH-quinone oxidoreductase subunit D from Alkalilimnicola ehrlichii (strain ATCC BAA-1101 / DSM 17681 / MLHE-1).